The sequence spans 409 residues: Arginine deiminase (409 aa).

The active-site Amidino-cysteine intermediate is cysteine 399.

Belongs to the arginine deiminase family.

The protein resides in the cytoplasm. The catalysed reaction is L-arginine + H2O = L-citrulline + NH4(+). It participates in amino-acid degradation; L-arginine degradation via ADI pathway; carbamoyl phosphate from L-arginine: step 1/2. This is Arginine deiminase (arcA) from Latilactobacillus sakei (Lactobacillus sakei).